A 378-amino-acid chain; its full sequence is Homoserine O-acetyltransferase (378 aa).

In terms of domain architecture, AB hydrolase-1 spans 54-355 (NAILVCHALS…NNPAGHDSFL (302 aa)). The Nucleophile role is filled by Ser159. Arg228 is a substrate binding site. Residues Asp318 and His351 contribute to the active site. Substrate is bound at residue Asp352.

Belongs to the AB hydrolase superfamily. MetX family. In terms of assembly, homodimer.

Its subcellular location is the cytoplasm. The enzyme catalyses L-homoserine + acetyl-CoA = O-acetyl-L-homoserine + CoA. The protein operates within amino-acid biosynthesis; L-methionine biosynthesis via de novo pathway; O-acetyl-L-homoserine from L-homoserine: step 1/1. Transfers an acetyl group from acetyl-CoA to L-homoserine, forming acetyl-L-homoserine. The chain is Homoserine O-acetyltransferase from Leptospira biflexa serovar Patoc (strain Patoc 1 / Ames).